The primary structure comprises 192 residues: Potassium-transporting ATPase KdpC subunit (192 aa).

A helical transmembrane segment spans residues 14-34; the sequence is LTGVLVVLCGLIYPAMVTGIA.

It belongs to the KdpC family. In terms of assembly, the system is composed of three essential subunits: KdpA, KdpB and KdpC.

The protein resides in the cell membrane. Its function is as follows. Part of the high-affinity ATP-driven potassium transport (or Kdp) system, which catalyzes the hydrolysis of ATP coupled with the electrogenic transport of potassium into the cytoplasm. This subunit acts as a catalytic chaperone that increases the ATP-binding affinity of the ATP-hydrolyzing subunit KdpB by the formation of a transient KdpB/KdpC/ATP ternary complex. This is Potassium-transporting ATPase KdpC subunit from Bacillus cytotoxicus (strain DSM 22905 / CIP 110041 / 391-98 / NVH 391-98).